We begin with the raw amino-acid sequence, 213 residues long: 5''-phosphoribostamycin phosphatase (213 aa).

Residue His-8 is the Tele-phosphohistidine intermediate of the active site. His-155 is a catalytic residue.

This sequence belongs to the histidine phosphatase superfamily.

It carries out the reaction 5''-phosphoribostamycin + H2O = ribostamycin + phosphate. The protein operates within antibiotic biosynthesis; butirosin biosynthesis. Catalyzes dephosphorylation of 5''-phosphoribostamycin to generate ribostamycinin the biosynthetic pathway of butirosin. In Niallia circulans (Bacillus circulans), this protein is 5''-phosphoribostamycin phosphatase (btrP).